A 126-amino-acid polypeptide reads, in one-letter code: Holo-[acyl-carrier-protein] synthase (126 aa).

The Mg(2+) site is built by Asp9 and Glu58.

This sequence belongs to the P-Pant transferase superfamily. AcpS family. The cofactor is Mg(2+).

It localises to the cytoplasm. It catalyses the reaction apo-[ACP] + CoA = holo-[ACP] + adenosine 3',5'-bisphosphate + H(+). In terms of biological role, transfers the 4'-phosphopantetheine moiety from coenzyme A to a Ser of acyl-carrier-protein. The polypeptide is Holo-[acyl-carrier-protein] synthase (Klebsiella pneumoniae (strain 342)).